The sequence spans 200 residues: MHKRRTAKSINKPPPIQGAIKKPTPVAEPPSIDADLVTQFEVELCWCVQQLQTALDSGKLAQKVAEDTAKNIKVLTSSTAPLIRKRQVMKLALGDYRAKMQQEEQKLLLASRQIKFTPTAESSKKSSFVKKSALLSSGKDFRFNFPSPAEDTSSKEPQPVQDFDPSSLQPAEAGSPFKFNFTIAEDSANDISFSGLNLNK.

Disordered regions lie at residues 1 to 28 (MHKRRTAKSINKPPPIQGAIKKPTPVAE) and 139 to 174 (KDFRFNFPSPAEDTSSKEPQPVQDFDPSSLQPAEAG).

Belongs to the UPF0488 family.

The chain is UPF0488 protein CG14286 from Drosophila melanogaster (Fruit fly).